The primary structure comprises 271 residues: NADPH-dependent 7-cyano-7-deazaguanine reductase (271 aa).

81 to 83 is a substrate binding site; that stretch reads IES. 83–84 provides a ligand contact to NADPH; the sequence is SK. The active-site Thioimide intermediate is the Cys177. Catalysis depends on Asp184, which acts as the Proton donor. A substrate-binding site is contributed by 216-217; the sequence is HE. Position 245–246 (245–246) interacts with NADPH; that stretch reads RG.

Belongs to the GTP cyclohydrolase I family. QueF type 2 subfamily. In terms of assembly, homodimer.

It localises to the cytoplasm. The catalysed reaction is 7-aminomethyl-7-carbaguanine + 2 NADP(+) = 7-cyano-7-deazaguanine + 2 NADPH + 3 H(+). The protein operates within tRNA modification; tRNA-queuosine biosynthesis. Its function is as follows. Catalyzes the NADPH-dependent reduction of 7-cyano-7-deazaguanine (preQ0) to 7-aminomethyl-7-deazaguanine (preQ1). In Xanthomonas campestris pv. campestris (strain 8004), this protein is NADPH-dependent 7-cyano-7-deazaguanine reductase.